We begin with the raw amino-acid sequence, 162 residues long: Inorganic pyrophosphatase (162 aa).

A Mg(2+)-binding site is contributed by E8. Substrate contacts are provided by K16, R30, and Y42. The Mg(2+) site is built by D52, D57, D84, and D89. The active-site Proton acceptor is the D89. Y126 is a binding site for substrate.

The protein belongs to the PPase family. In terms of assembly, homohexamer. Mg(2+) is required as a cofactor.

Its subcellular location is the cytoplasm. It carries out the reaction diphosphate + H2O = 2 phosphate + H(+). Functionally, catalyzes the hydrolysis of inorganic pyrophosphate (PPi) forming two phosphate ions. The polypeptide is Inorganic pyrophosphatase (Mycobacterium bovis (strain ATCC BAA-935 / AF2122/97)).